We begin with the raw amino-acid sequence, 121 residues long: Autophagy-related protein 8f (121 aa).

Gly-117 is lipidated: Phosphatidylethanolamine amidated glycine. The propeptide at 118–121 (FGSP) is removed in mature form.

Belongs to the ATG8 family. In terms of assembly, interacts with ATG4. Interacts with NBR1. Interacts with ATI1 and ATI2. Interacts with SH3P2. In terms of processing, the C-terminal 4 residues are removed by ATG4 to expose Gly-117 at the C-terminus. This Gly-117 forms then a thioester bond with the 'Cys-558' of ATG7 (E1-like activating enzyme) before being transferred to the 'Cys-258' of ATG3 (the specific E2 conjugating enzyme), in order to be finally amidated with phosphatidylethanolamine. This lipid modification anchors ATG8 to autophagosomes. In terms of tissue distribution, constitutively expressed.

It is found in the cytoplasmic vesicle. The protein resides in the autophagosome membrane. Its subcellular location is the vacuole membrane. The protein localises to the cytoplasm. It localises to the cytoskeleton. Its function is as follows. Ubiquitin-like modifier involved in autophagosomes formation. May mediate the delivery of the autophagosomes to the vacuole via the microtubule cytoskeleton. This chain is Autophagy-related protein 8f (ATG8F), found in Arabidopsis thaliana (Mouse-ear cress).